The sequence spans 243 residues: Probable transcriptional regulatory protein BAPKO_0024/BafPKo_0025 (243 aa).

Belongs to the TACO1 family.

It localises to the cytoplasm. The sequence is that of Probable transcriptional regulatory protein BAPKO_0024/BafPKo_0025 from Borreliella afzelii (strain PKo) (Borrelia afzelii).